A 937-amino-acid polypeptide reads, in one-letter code: Putative leucine-rich repeat receptor-like serine/threonine-protein kinase At3g53590 (937 aa).

The signal sequence occupies residues 1-20 (MIPPNINVLIRSICINLVTS). At 21–547 (LPLNFAYIFI…LLAQTSGIRT (527 aa)) the chain is on the extracellular side. Asparagine 50, asparagine 63, asparagine 90, and asparagine 114 each carry an N-linked (GlcNAc...) asparagine glycan. 8 LRR repeats span residues 102-126 (LLYL…IGRI), 127-150 (SSLK…LGNL), 152-173 (NLNR…SFGN), 174-198 (LRSI…LSKL), 200-222 (KLVH…LAQL), 223-249 (PSLT…HFSR), 251-270 (VKLS…LSRI), and 271-294 (ENLS…KLSD). 3 N-linked (GlcNAc...) asparagine glycosylation sites follow: asparagine 162, asparagine 184, and asparagine 210. N-linked (GlcNAc...) asparagine glycosylation is found at asparagine 272 and asparagine 295. 3 LRR repeats span residues 296–316 (MTTI…SFSD), 317–341 (LNSL…IWQD), and 343–360 (SFEN…NFSD). N-linked (GlcNAc...) asparagine glycosylation is found at asparagine 327, asparagine 357, asparagine 370, asparagine 413, asparagine 499, and asparagine 516. The chain crosses the membrane as a helical span at residues 548–568 (IVWMMIVAGSVVAATVLSVTA). Residues 569–937 (TLLYVRKRRE…SGFFHAVKPR (369 aa)) lie on the Cytoplasmic side of the membrane. Residues 614–886 (FDSSTLIGRG…SKVVKELEGI (273 aa)) enclose the Protein kinase domain. ATP contacts are provided by residues 620–628 (IGRGSYGKV) and lysine 642. Aspartate 738 (proton acceptor) is an active-site residue.

The protein belongs to the protein kinase superfamily. Ser/Thr protein kinase family.

Its subcellular location is the cell membrane. The catalysed reaction is L-seryl-[protein] + ATP = O-phospho-L-seryl-[protein] + ADP + H(+). The enzyme catalyses L-threonyl-[protein] + ATP = O-phospho-L-threonyl-[protein] + ADP + H(+). This chain is Putative leucine-rich repeat receptor-like serine/threonine-protein kinase At3g53590, found in Arabidopsis thaliana (Mouse-ear cress).